The sequence spans 379 residues: Succinyl-diaminopimelate desuccinylase (379 aa).

His-68 is a Zn(2+) binding site. Residue Asp-70 is part of the active site. Asp-101 serves as a coordination point for Zn(2+). Residue Glu-135 is the Proton acceptor of the active site. Residues Glu-136, Glu-164, and His-350 each contribute to the Zn(2+) site.

This sequence belongs to the peptidase M20A family. DapE subfamily. As to quaternary structure, homodimer. Zn(2+) serves as cofactor. It depends on Co(2+) as a cofactor.

The enzyme catalyses N-succinyl-(2S,6S)-2,6-diaminopimelate + H2O = (2S,6S)-2,6-diaminopimelate + succinate. The protein operates within amino-acid biosynthesis; L-lysine biosynthesis via DAP pathway; LL-2,6-diaminopimelate from (S)-tetrahydrodipicolinate (succinylase route): step 3/3. Catalyzes the hydrolysis of N-succinyl-L,L-diaminopimelic acid (SDAP), forming succinate and LL-2,6-diaminopimelate (DAP), an intermediate involved in the bacterial biosynthesis of lysine and meso-diaminopimelic acid, an essential component of bacterial cell walls. This Bordetella parapertussis (strain 12822 / ATCC BAA-587 / NCTC 13253) protein is Succinyl-diaminopimelate desuccinylase.